The primary structure comprises 213 residues: Uridine kinase (213 aa).

Gly15–Ser22 is a binding site for ATP.

Belongs to the uridine kinase family.

It is found in the cytoplasm. The catalysed reaction is uridine + ATP = UMP + ADP + H(+). It carries out the reaction cytidine + ATP = CMP + ADP + H(+). It participates in pyrimidine metabolism; CTP biosynthesis via salvage pathway; CTP from cytidine: step 1/3. It functions in the pathway pyrimidine metabolism; UMP biosynthesis via salvage pathway; UMP from uridine: step 1/1. The chain is Uridine kinase from Klebsiella pneumoniae (strain 342).